Consider the following 451-residue polypeptide: Phosphoglucosamine mutase (451 aa).

Catalysis depends on Ser102, which acts as the Phosphoserine intermediate. Mg(2+) contacts are provided by Ser102, Asp243, Asp245, and Asp247. Ser102 carries the phosphoserine modification.

The protein belongs to the phosphohexose mutase family. Requires Mg(2+) as cofactor. Activated by phosphorylation.

It carries out the reaction alpha-D-glucosamine 1-phosphate = D-glucosamine 6-phosphate. Catalyzes the conversion of glucosamine-6-phosphate to glucosamine-1-phosphate. This is Phosphoglucosamine mutase from Brucella anthropi (strain ATCC 49188 / DSM 6882 / CCUG 24695 / JCM 21032 / LMG 3331 / NBRC 15819 / NCTC 12168 / Alc 37) (Ochrobactrum anthropi).